Consider the following 687-residue polypeptide: Fimbrin-5 (687 aa).

The region spanning 7–74 is the EF-hand domain; that stretch reads VLVSDPWLQS…KSVLDKSYPN (68 aa). 4 consecutive Calponin-homology (CH) domains span residues 122 to 239, 267 to 370, 392 to 498, and 513 to 621; these read ESEK…KIQM, LAPE…QHRN, SREE…RYTM, and EITD…YWSL. Actin-binding stretches follow at residues 122 to 370 and 392 to 621; these read ESEK…QHRN and SREE…YWSL. The interval 628–687 is disordered; it reads ESTVSEDATDDGDANSVAGEISNLSIDGASESSPTVQDQELLTKADNDEDEVDGENNKDA. Residues 649-667 show a composition bias toward polar residues; sequence SNLSIDGASESSPTVQDQE.

Interacts with F-actin. Expressed in mature pollen.

Its subcellular location is the cytoplasm. The protein localises to the cytoskeleton. Its function is as follows. Cross-links actin filaments (F-actin) in a calcium independent manner. Induces the formation of actin bundles. Stabilizes and prevents F-actin depolymerization mediated by latrunculin B (LatB). This chain is Fimbrin-5, found in Arabidopsis thaliana (Mouse-ear cress).